Here is a 174-residue protein sequence, read N- to C-terminus: Cell division protein FtsL (174 aa).

At Met-1 to Lys-38 the chain is on the cytoplasmic side. The helical transmembrane segment at Ile-39 to Thr-59 threads the bilayer. Topologically, residues Met-60–Val-174 are extracellular.

The protein belongs to the FtsL family.

Its subcellular location is the cell membrane. Its function is as follows. Essential cell division protein. This chain is Cell division protein FtsL, found in Moorella thermoacetica (strain ATCC 39073 / JCM 9320).